The primary structure comprises 329 residues: 4-hydroxythreonine-4-phosphate dehydrogenase (329 aa).

Substrate contacts are provided by H136 and T137. 3 residues coordinate a divalent metal cation: H166, H211, and H266. 3 residues coordinate substrate: K274, N283, and R292.

Belongs to the PdxA family. In terms of assembly, homodimer. It depends on Zn(2+) as a cofactor. Mg(2+) serves as cofactor. Requires Co(2+) as cofactor.

It is found in the cytoplasm. The catalysed reaction is 4-(phosphooxy)-L-threonine + NAD(+) = 3-amino-2-oxopropyl phosphate + CO2 + NADH. The protein operates within cofactor biosynthesis; pyridoxine 5'-phosphate biosynthesis; pyridoxine 5'-phosphate from D-erythrose 4-phosphate: step 4/5. Catalyzes the NAD(P)-dependent oxidation of 4-(phosphooxy)-L-threonine (HTP) into 2-amino-3-oxo-4-(phosphooxy)butyric acid which spontaneously decarboxylates to form 3-amino-2-oxopropyl phosphate (AHAP). This Escherichia coli O17:K52:H18 (strain UMN026 / ExPEC) protein is 4-hydroxythreonine-4-phosphate dehydrogenase.